A 108-amino-acid polypeptide reads, in one-letter code: Small ribosomal subunit protein uS17 (108 aa).

Belongs to the universal ribosomal protein uS17 family. Part of the 30S ribosomal subunit.

One of the primary rRNA binding proteins, it binds specifically to the 5'-end of 16S ribosomal RNA. The polypeptide is Small ribosomal subunit protein uS17 (Methanoregula boonei (strain DSM 21154 / JCM 14090 / 6A8)).